The chain runs to 622 residues: 1-deoxy-D-xylulose-5-phosphate synthase (622 aa).

Residues His80 and 121-123 (GHS) contribute to the thiamine diphosphate site. Asp152 serves as a coordination point for Mg(2+). Residues 153-154 (GA), Asn181, Tyr288, and Glu370 each bind thiamine diphosphate. A Mg(2+)-binding site is contributed by Asn181.

It belongs to the transketolase family. DXPS subfamily. Homodimer. Mg(2+) is required as a cofactor. It depends on thiamine diphosphate as a cofactor.

It catalyses the reaction D-glyceraldehyde 3-phosphate + pyruvate + H(+) = 1-deoxy-D-xylulose 5-phosphate + CO2. The protein operates within metabolic intermediate biosynthesis; 1-deoxy-D-xylulose 5-phosphate biosynthesis; 1-deoxy-D-xylulose 5-phosphate from D-glyceraldehyde 3-phosphate and pyruvate: step 1/1. Functionally, catalyzes the acyloin condensation reaction between C atoms 2 and 3 of pyruvate and glyceraldehyde 3-phosphate to yield 1-deoxy-D-xylulose-5-phosphate (DXP). The protein is 1-deoxy-D-xylulose-5-phosphate synthase of Shewanella sp. (strain MR-4).